A 171-amino-acid chain; its full sequence is Adenine phosphoribosyltransferase (171 aa).

The protein belongs to the purine/pyrimidine phosphoribosyltransferase family. Homodimer.

The protein localises to the cytoplasm. It catalyses the reaction AMP + diphosphate = 5-phospho-alpha-D-ribose 1-diphosphate + adenine. Its pathway is purine metabolism; AMP biosynthesis via salvage pathway; AMP from adenine: step 1/1. Functionally, catalyzes a salvage reaction resulting in the formation of AMP, that is energically less costly than de novo synthesis. The polypeptide is Adenine phosphoribosyltransferase (Syntrophotalea carbinolica (strain DSM 2380 / NBRC 103641 / GraBd1) (Pelobacter carbinolicus)).